Consider the following 408-residue polypeptide: Phosphopentomutase (408 aa).

Positions 10, 303, 308, 344, 345, and 356 each coordinate Mn(2+).

Belongs to the phosphopentomutase family. Mn(2+) serves as cofactor.

It is found in the cytoplasm. The catalysed reaction is 2-deoxy-alpha-D-ribose 1-phosphate = 2-deoxy-D-ribose 5-phosphate. It carries out the reaction alpha-D-ribose 1-phosphate = D-ribose 5-phosphate. It participates in carbohydrate degradation; 2-deoxy-D-ribose 1-phosphate degradation; D-glyceraldehyde 3-phosphate and acetaldehyde from 2-deoxy-alpha-D-ribose 1-phosphate: step 1/2. Isomerase that catalyzes the conversion of deoxy-ribose 1-phosphate (dRib-1-P) and ribose 1-phosphate (Rib-1-P) to deoxy-ribose 5-phosphate (dRib-5-P) and ribose 5-phosphate (Rib-5-P), respectively. The protein is Phosphopentomutase of Tolumonas auensis (strain DSM 9187 / NBRC 110442 / TA 4).